A 388-amino-acid chain; its full sequence is Cuticle-degrading protease (388 aa).

A signal peptide spans 1–18; it reads MHLSALLTLLPAVLAAPA. A propeptide spanning residues 19 to 107 is cleaved from the precursor; the sequence is TIGRRAEPAP…IEKDAVMRIS (89 aa). The 66-residue stretch at 41-106 folds into the Inhibitor I9 domain; that stretch reads KYIVKFKDDI…FIEKDAVMRI (66 aa). The 273-residue stretch at 116–388 folds into the Peptidase S8 domain; that stretch reads PWGLGRISHR…TVNYLAYNGA (273 aa). Cystine bridges form between cysteine 143/cysteine 233 and cysteine 288/cysteine 360. Residues aspartate 148 and histidine 179 each act as charge relay system in the active site. Asparagine 296 carries an N-linked (GlcNAc...) asparagine glycan. Serine 334 functions as the Charge relay system in the catalytic mechanism.

It belongs to the peptidase S8 family.

Its subcellular location is the secreted. Functionally, capable of breaching the insect cuticle. This Metarhizium anisopliae (Entomophthora anisopliae) protein is Cuticle-degrading protease (PR1).